We begin with the raw amino-acid sequence, 352 residues long: N-terminal EF-hand calcium-binding protein 1 (352 aa).

Ser-4 bears the Phosphoserine mark. EF-hand domains lie at Lys-26–Ser-61 and Leu-60–Glu-95. Asp-39, Asn-41, Asp-43, Lys-45, and Glu-50 together coordinate Ca(2+). Residues Leu-135–Gln-163 adopt a coiled-coil conformation. The tract at residues Glu-155–Val-202 is disordered. Over residues His-190–Val-202 the composition is skewed to polar residues. 2 positions are modified to phosphoserine: Ser-192 and Ser-197. A coiled-coil region spans residues Glu-209–Tyr-275. The ABM domain maps to Met-252–Met-340.

As to quaternary structure, interacts with STX1. May interact with CPNE6.

The protein localises to the cytoplasm. The chain is N-terminal EF-hand calcium-binding protein 1 (Necab1) from Rattus norvegicus (Rat).